A 206-amino-acid chain; its full sequence is Small ribosomal subunit protein uS4A (206 aa).

Residues 96–156 enclose the S4 RNA-binding domain; it reads GRLDNVVYRM…EKAKKQSRIG (61 aa).

This sequence belongs to the universal ribosomal protein uS4 family. In terms of assembly, part of the 30S ribosomal subunit. Contacts protein S5. The interaction surface between S4 and S5 is involved in control of translational fidelity.

Its function is as follows. One of the primary rRNA binding proteins, it binds directly to 16S rRNA where it nucleates assembly of the body of the 30S subunit. With S5 and S12 plays an important role in translational accuracy. The sequence is that of Small ribosomal subunit protein uS4A from Psychromonas ingrahamii (strain DSM 17664 / CCUG 51855 / 37).